A 316-amino-acid chain; its full sequence is Olfactory receptor class A-like protein 1 (316 aa).

The Extracellular portion of the chain corresponds to 1–8 (MDLCVTIK). The chain crosses the membrane as a helical span at residues 9-29 (GVSFLLQAGLGILANALVLLA). The Cytoplasmic segment spans residues 30–39 (YAHIRLAEAR). The chain crosses the membrane as a helical span at residues 40–60 (LQPVDAILCHLALVDLLLLLT). Over 61–97 (RGVPQTMTVFGMRNLLDDTGCKVVIYTYRIARALSVC) the chain is Extracellular. C81 and C169 are disulfide-bonded. Residues 98-118 (ITCMLSVFQAVTVAPAAGPLL) form a helical membrane-spanning segment. Residues 119 to 132 (SGVKARLPQLLAPT) lie on the Cytoplasmic side of the membrane. The helical transmembrane segment at 133–153 (FAALWFINMAVCIAAPFFSVA) threads the bilayer. The Extracellular segment spans residues 154–187 (PRNGTVPPFTLNLGFCHVDFHDNLSYVLNGVAVS). N-linked (GlcNAc...) asparagine glycosylation is found at N156 and N176. Residues 188 to 208 (VRDFAFVGAMLASSGFILLLL) form a helical membrane-spanning segment. The Cytoplasmic segment spans residues 209–233 (HRHRRQVRAVRRSQGSTMETRAART). The helical transmembrane segment at 234 to 254 (VLMLVILYSVFFGIDNVIWIY) threads the bilayer. The Extracellular segment spans residues 255-264 (MLTVAQVPPV). A helical membrane pass occupies residues 265–285 (VADMRVFFSSCYASLSPFLII). The Cytoplasmic segment spans residues 286-316 (SSNRKLKARMVCATSEQERQAEDGKNSSGKN).

The protein belongs to the G-protein coupled receptor 1 family. As to expression, highly expressed in the olfactory rosette where it localizes to a subset of olfactory sensory neurons, mainly in the apical region of the neuroepithelium. Not detected in other tissues tested.

It localises to the cell membrane. Probable pheromone receptor. Shows high specificity for 4-hydroxyphenylacetic acid. Activation of the receptor stimulates intracellular calcium release. The polypeptide is Olfactory receptor class A-like protein 1 (Danio rerio (Zebrafish)).